The primary structure comprises 333 residues: Ketol-acid reductoisomerase (NADP(+)) (333 aa).

The KARI N-terminal Rossmann domain occupies 1 to 179 (MFYDDDADLS…GGTRAGVIKT (179 aa)). Residues 22-25 (YGSQ), Lys-45, Ser-48, Ser-50, and 80-83 (DTAQ) each bind NADP(+). His-105 is a catalytic residue. Gly-131 lines the NADP(+) pocket. The KARI C-terminal knotted domain occupies 180-325 (TFKDETETDL…KKLRDLMSWV (146 aa)). Mg(2+) contacts are provided by Asp-188, Glu-192, Glu-224, and Glu-228. Residue Ser-249 coordinates substrate.

The protein belongs to the ketol-acid reductoisomerase family. Mg(2+) is required as a cofactor.

It carries out the reaction (2R)-2,3-dihydroxy-3-methylbutanoate + NADP(+) = (2S)-2-acetolactate + NADPH + H(+). The enzyme catalyses (2R,3R)-2,3-dihydroxy-3-methylpentanoate + NADP(+) = (S)-2-ethyl-2-hydroxy-3-oxobutanoate + NADPH + H(+). It participates in amino-acid biosynthesis; L-isoleucine biosynthesis; L-isoleucine from 2-oxobutanoate: step 2/4. Its pathway is amino-acid biosynthesis; L-valine biosynthesis; L-valine from pyruvate: step 2/4. In terms of biological role, involved in the biosynthesis of branched-chain amino acids (BCAA). Catalyzes an alkyl-migration followed by a ketol-acid reduction of (S)-2-acetolactate (S2AL) to yield (R)-2,3-dihydroxy-isovalerate. In the isomerase reaction, S2AL is rearranged via a Mg-dependent methyl migration to produce 3-hydroxy-3-methyl-2-ketobutyrate (HMKB). In the reductase reaction, this 2-ketoacid undergoes a metal-dependent reduction by NADPH to yield (R)-2,3-dihydroxy-isovalerate. The chain is Ketol-acid reductoisomerase (NADP(+)) from Mycobacterium ulcerans (strain Agy99).